The sequence spans 219 residues: Claudin-3 (219 aa).

Residues 1–8 are Cytoplasmic-facing; sequence MSMGLEIT. The chain crosses the membrane as a helical span at residues 9-29; it reads GTSLAVLGWLCTIVCCALPMW. The Extracellular segment spans residues 30 to 80; the sequence is RVSAFIGSSIITAQITWEGLWMNCVVQSTGQMQCKMYDSLLALPQDLQAAR. A helical transmembrane segment spans residues 81–101; it reads ALIVVSILLAAFGLLVALVGA. Residues 102–115 are Cytoplasmic-facing; sequence QCTNCVQDETAKAK. The chain crosses the membrane as a helical span at residues 116–136; the sequence is ITIVAGVLFLLAAVLTLVPVS. Over 137–161 the chain is Extracellular; that stretch reads WSANTIIRDFYNPLVPEAQKREMGT. The chain crosses the membrane as a helical span at residues 162–182; that stretch reads GLYVGWAAAALQLLGGALLCC. The Cytoplasmic portion of the chain corresponds to 183 to 219; that stretch reads SCPPREKYAPTKILYSAPRSTGPGTGTGTAYDRKDYV. Tyr-197 is subject to Phosphotyrosine. At Ser-198 the chain carries Phosphoserine. Residues 218 to 219 form an interactions with TJP1, TJP2 and TJP3 region; that stretch reads YV.

The protein belongs to the claudin family. As to quaternary structure, can form homo- and heteropolymers with other CLDN. Homopolymers interact with CLDN1 and CLDN2 homopolymers. Interacts in cis (within the same plasma membrane) with CLDN19. Directly interacts with TJP1/ZO-1, TJP2/ZO-2 and TJP3/ZO-3.

The protein localises to the cell junction. It is found in the tight junction. The protein resides in the cell membrane. Plays a major role in tight junction-specific obliteration of the intercellular space, through calcium-independent cell-adhesion activity. In Rattus norvegicus (Rat), this protein is Claudin-3 (Cldn3).